Consider the following 126-residue polypeptide: MRSSLLLGLTVVVLLGVIVPPCMAGQALNKLMPKIVSAIIYMVGQPNAGVTFLGHQCLVESTRQPDGFYTAKMSCASWTHDNPIVGEGRSRVELEALKGSITNFVQTASNYKKFTIDEVEDWIASY.

An N-terminal signal peptide occupies residues 1–24 (MRSSLLLGLTVVVLLGVIVPPCMA).

Expressed in the ejaculatory ducts of mature males. Not detected in the ejaculatory ducts of immature males. Not detected in hepatopancreas, female reproductive tract, eyes, exoskeleton, subcuticular epithelia, heart, gills, stomach, muscle and hemocytes.

The protein resides in the secreted. In terms of biological role, has antibacterial activity against the Gram-positive bacterium M.luteus with an IC(90) of 125ug/ml. Has weak antibacterial activity against the Gram-negative bacterium A.hydrophila. This chain is Scygonadin, found in Scylla serrata (Mud crab).